The sequence spans 1007 residues: Probable beta-galactosidase A (1007 aa).

Residues 1–18 form the signal peptide; sequence MKLSSACAIALLAAQAAG. Positions 96, 140, 141, and 142 each coordinate substrate. N-linked (GlcNAc...) asparagine glycosylation occurs at N156. Substrate is bound at residue N199. Residue E200 is the Proton donor of the active site. C205 and C206 are oxidised to a cystine. Residue Y260 participates in substrate binding. The cysteines at positions 266 and 315 are disulfide-linked. Residue E298 is the Nucleophile of the active site. Position 364 (Y364) interacts with substrate. Residues N373, N402, N422, N478, N522, N622, N739, N760, N777, and N805 are each glycosylated (N-linked (GlcNAc...) asparagine). The disordered stretch occupies residues 862–881; the sequence is RQGFHQPEPPSQDWKSSSPL. N914 carries N-linked (GlcNAc...) asparagine glycosylation.

This sequence belongs to the glycosyl hydrolase 35 family.

It is found in the secreted. The catalysed reaction is Hydrolysis of terminal non-reducing beta-D-galactose residues in beta-D-galactosides.. Its function is as follows. Cleaves beta-linked terminal galactosyl residues from gangliosides, glycoproteins, and glycosaminoglycans. This Aspergillus phoenicis (Aspergillus saitoi) protein is Probable beta-galactosidase A (lacA).